Here is a 174-residue protein sequence, read N- to C-terminus: MTHCCSPCCQPTCCRTTCCRTTCWKPTTVTTCSSTPCCQPACCVSSCCQPCCRPTCCQNTCCRTTCCQPTCVTSCCQPSCCSTPCCQPTCCGSSCCGQTSCGSSCGQSSSCAPVYCRRTCYYPTTVCLPGCLNQSCGSNCCQPCCRPACCETTCCRTTCFQPTCVSSCCQPSCC.

Tandem repeats lie at residues 8 to 12 (CCQPT), 13 to 17 (CCRTT), 18 to 22 (CCRTT), 37 to 41 (CCQPA), 42 to 46 (CCVSS), 51 to 55 (CCRPT), 61 to 65 (CCRTT), 66 to 70 (CCQPT), 75 to 79 (CCQPS), 80 to 84 (CCSTP), 85 to 89 (CCQPT), 90 to 94 (CCGSS), 95 to 99 (CCGQT), 144 to 148 (CCRPA), 149 to 153 (CCETT), 154 to 158 (CCRTT), and 168 to 172 (CCQPS). The segment at 8 to 172 (CCQPTCCRTT…TCVSSCCQPS (165 aa)) is 17 X 5 AA repeats of C-C-[RQVSGE]-[SPTQ]-[TASP].

Belongs to the KRTAP type 9 family. As to quaternary structure, interacts with hair keratins.

Its function is as follows. In the hair cortex, hair keratin intermediate filaments are embedded in an interfilamentous matrix, consisting of hair keratin-associated proteins (KRTAP), which are essential for the formation of a rigid and resistant hair shaft through their extensive disulfide bond cross-linking with abundant cysteine residues of hair keratins. The matrix proteins include the high-sulfur and high-glycine-tyrosine keratins. This is Keratin-associated protein 9-2 (KRTAP9-2) from Homo sapiens (Human).